The chain runs to 112 residues: Large ribosomal subunit protein mL53 (112 aa).

Belongs to the mitochondrion-specific ribosomal protein mL53 family. In terms of assembly, component of the mitochondrial ribosome large subunit (39S) which comprises a 16S rRNA and about 50 distinct proteins.

The protein localises to the mitochondrion. This chain is Large ribosomal subunit protein mL53 (MRPL53), found in Pongo abelii (Sumatran orangutan).